We begin with the raw amino-acid sequence, 153 residues long: UPF0102 protein Pnap_0271 (153 aa).

This sequence belongs to the UPF0102 family.

The protein is UPF0102 protein Pnap_0271 of Polaromonas naphthalenivorans (strain CJ2).